Reading from the N-terminus, the 117-residue chain is Large ribosomal subunit protein uL18 (117 aa).

Belongs to the universal ribosomal protein uL18 family. As to quaternary structure, part of the 50S ribosomal subunit; part of the 5S rRNA/L5/L18/L25 subcomplex. Contacts the 5S and 23S rRNAs.

This is one of the proteins that bind and probably mediate the attachment of the 5S RNA into the large ribosomal subunit, where it forms part of the central protuberance. In Actinobacillus pleuropneumoniae serotype 5b (strain L20), this protein is Large ribosomal subunit protein uL18.